A 348-amino-acid chain; its full sequence is Protein RecA (348 aa).

65-72 contributes to the ATP binding site; the sequence is GPESSGKT. The disordered stretch occupies residues 326 to 348; that stretch reads QMGSESLSSSSDDDDIKEESGEE. Acidic residues predominate over residues 336–348; sequence SDDDDIKEESGEE.

Belongs to the RecA family.

Its subcellular location is the cytoplasm. In terms of biological role, can catalyze the hydrolysis of ATP in the presence of single-stranded DNA, the ATP-dependent uptake of single-stranded DNA by duplex DNA, and the ATP-dependent hybridization of homologous single-stranded DNAs. It interacts with LexA causing its activation and leading to its autocatalytic cleavage. The protein is Protein RecA of Campylobacter hominis (strain ATCC BAA-381 / DSM 21671 / CCUG 45161 / LMG 19568 / NCTC 13146 / CH001A).